We begin with the raw amino-acid sequence, 245 residues long: E3 ubiquitin-protein ligase RNF138 (245 aa).

The RING-type zinc finger occupies 18 to 58 (CPVCQEVLKTPVRTAACQHVFCRKCFLTAMRESGIHCPLCR). Zn(2+) is bound by residues Cys86, Cys89, His101, and Cys105. The segment at 86 to 105 (CRCCSKKIKFYRMRHHYKSC) adopts a C2HC RNF-type zinc-finger fold. The tract at residues 128-154 (VRSSNRSETSASDNTETYQEDTSSSGH) is disordered. Phosphothreonine is present on Thr142. 2 C2H2-type zinc fingers span residues 157-180 (FKCP…NSNH) and 187-215 (VTCP…NQRH). A UIM domain is found at 225-243 (LQLDEETQYQTAVEESFQV).

Interacts with NLK. Interacts with XRCC5/Ku80. Interacts with RBBP8/CtIP. Auto-ubiquitinated.

Its subcellular location is the chromosome. The enzyme catalyses S-ubiquitinyl-[E2 ubiquitin-conjugating enzyme]-L-cysteine + [acceptor protein]-L-lysine = [E2 ubiquitin-conjugating enzyme]-L-cysteine + N(6)-ubiquitinyl-[acceptor protein]-L-lysine.. The protein operates within protein modification; protein ubiquitination. Its function is as follows. E3 ubiquitin-protein ligase involved in DNA damage response by promoting DNA resection and homologous recombination. Recruited to sites of double-strand breaks following DNA damage and specifically promotes double-strand break repair via homologous recombination. Two different, non-exclusive, mechanisms have been proposed. According to a report, regulates the choice of double-strand break repair by favoring homologous recombination over non-homologous end joining (NHEJ): acts by mediating ubiquitination of XRCC5/Ku80, leading to remove the Ku complex from DNA breaks, thereby promoting homologous recombination. According to another report, cooperates with UBE2Ds E2 ubiquitin ligases (UBE2D1, UBE2D2, UBE2D3 or UBE2D4) to promote homologous recombination by mediating ubiquitination of RBBP8/CtIP. Together with NLK, involved in the ubiquitination and degradation of TCF/LEF. Also exhibits auto-ubiquitination activity in combination with UBE2K. May act as a negative regulator in the Wnt/beta-catenin-mediated signaling pathway. The chain is E3 ubiquitin-protein ligase RNF138 from Mus musculus (Mouse).